The chain runs to 276 residues: Pantothenate synthetase (276 aa).

Met-25–His-32 is a binding site for ATP. The Proton donor role is filled by His-32. Residue Gln-56 participates in (R)-pantoate binding. Gln-56 contributes to the beta-alanine binding site. Position 143–146 (Gly-143–Asp-146) interacts with ATP. Residue Gln-149 participates in (R)-pantoate binding. ATP-binding positions include Val-172 and Leu-180–Arg-183.

It belongs to the pantothenate synthetase family. As to quaternary structure, homodimer.

The protein resides in the cytoplasm. It catalyses the reaction (R)-pantoate + beta-alanine + ATP = (R)-pantothenate + AMP + diphosphate + H(+). It participates in cofactor biosynthesis; (R)-pantothenate biosynthesis; (R)-pantothenate from (R)-pantoate and beta-alanine: step 1/1. Catalyzes the condensation of pantoate with beta-alanine in an ATP-dependent reaction via a pantoyl-adenylate intermediate. The polypeptide is Pantothenate synthetase (Thermus thermophilus (strain ATCC BAA-163 / DSM 7039 / HB27)).